The primary structure comprises 239 residues: Ubiquinone biosynthesis O-methyltransferase (239 aa).

S-adenosyl-L-methionine contacts are provided by Arg44, Gly63, Asp84, and Met128.

Belongs to the methyltransferase superfamily. UbiG/COQ3 family.

It carries out the reaction a 3-demethylubiquinol + S-adenosyl-L-methionine = a ubiquinol + S-adenosyl-L-homocysteine + H(+). The catalysed reaction is a 3-(all-trans-polyprenyl)benzene-1,2-diol + S-adenosyl-L-methionine = a 2-methoxy-6-(all-trans-polyprenyl)phenol + S-adenosyl-L-homocysteine + H(+). It participates in cofactor biosynthesis; ubiquinone biosynthesis. In terms of biological role, O-methyltransferase that catalyzes the 2 O-methylation steps in the ubiquinone biosynthetic pathway. This chain is Ubiquinone biosynthesis O-methyltransferase, found in Xanthomonas campestris pv. campestris (strain 8004).